The sequence spans 392 residues: Spermatogenesis associated 6-like protein (392 aa).

Ser-260 and Ser-263 each carry phosphoserine. Low complexity predominate over residues 286–301 (SCLDSSQFGKSSSSKQ). The segment at 286–305 (SCLDSSQFGKSSSSKQGDAD) is disordered.

Belongs to the SPATA6 family.

This chain is Spermatogenesis associated 6-like protein (SPATA6L), found in Homo sapiens (Human).